Here is a 148-residue protein sequence, read N- to C-terminus: uncharacterized protein (148 aa).

It localises to the plastid. It is found in the chloroplast. This is an uncharacterized protein from Porphyra purpurea (Red seaweed).